Reading from the N-terminus, the 762-residue chain is Palmitoyltransferase ZDHHC8 (762 aa).

Residues 1-13 (MPRSPGTRLKPAK) are Cytoplasmic-facing. Residues 14–34 (YIPVATAAALLVGSSTLFFVF) traverse the membrane as a helical segment. At 35–52 (TCPWLTRAVSPAIPVYNG) the chain is on the lumenal side. Residues 53-73 (ILFLFVLANFSMATFMDPGVF) traverse the membrane as a helical segment. The Cytoplasmic segment spans residues 74–148 (PRADEDEDKE…NCIGRRNYRY (75 aa)). The DHHC domain occupies 104-154 (KWCATCHFYRPPRCSHCSVCDNCVEDFDHHCPWVNNCIGRRNYRYFFLFLL). The active-site S-palmitoyl cysteine intermediate is C134. Residues 149 to 169 (FFLFLLSLSAHMVGVVAFGLL) form a helical membrane-spanning segment. Topologically, residues 170–190 (YVLNHSEGLGAAHTTITMAVM) are lumenal. The chain crosses the membrane as a helical span at residues 191–211 (CVAGLFFIPVIGLTGFHVVLV). Over 212–762 (TRGRTTNEQV…VGGTTYEISV (551 aa)) the chain is Cytoplasmic. Disordered regions lie at residues 289–350 (GLKA…PPTP), 362–423 (GPKT…TTDA), 436–537 (ASRR…SPVR), and 551–574 (ERKD…GDSG). S335 is subject to Phosphoserine. The span at 408–417 (LRPPYPPSPP) shows a compositional bias: pro residues. At R439 the chain carries Omega-N-methylarginine. Residues 471 to 485 (RNGSLSYDSLLNPGS) show a composition bias toward polar residues. Over residues 511–521 (PSDPPRPPPRS) the composition is skewed to pro residues. Positions 551–562 (ERKDREERERLL) are enriched in basic and acidic residues. Phosphoserine is present on residues S603 and S624. Residues 626–644 (SSLSSSMSRAPRTSSSSLQ) are compositionally biased toward low complexity. 2 disordered regions span residues 626-684 (SSLS…SYTG) and 707-744 (DHPQ…PARH). 4 positions are modified to phosphoserine: S672, S679, S722, and S740.

Belongs to the DHHC palmitoyltransferase family. ERF2/ZDHHC9 subfamily. In terms of tissue distribution, expressed in brain cortex and hippocampus.

It localises to the golgi apparatus membrane. Its subcellular location is the mitochondrion membrane. It carries out the reaction L-cysteinyl-[protein] + hexadecanoyl-CoA = S-hexadecanoyl-L-cysteinyl-[protein] + CoA. Palmitoyltransferase that catalyzes the addition of palmitate onto various protein substrates and therefore functions in several unrelated biological processes. Through the palmitoylation of ABCA1 regulates the localization of the transporter to the plasma membrane and thereby regulates its function in cholesterol and phospholipid efflux. Could also pamitoylate the D(2) dopamine receptor DRD2 and regulate its stability and localization to the plasma membrane. Could also play a role in glutamatergic transmission. The chain is Palmitoyltransferase ZDHHC8 from Mus musculus (Mouse).